The chain runs to 153 residues: Agglutinin (153 aa).

Beta-D-galactosyl-(1-&gt;3)-N-acetyl-D-galactosamine is bound by residues 22–25 (NAWE) and Asn46. The Ricin B-type lectin domain maps to 58 to 153 (GDSAEYLIIN…DNQKWYFDAK (96 aa)).

In terms of assembly, homodimer.

Its function is as follows. Lectin that primarily recognizes glycans with a non-reducing terminal N-acetylgalactosamine (GalNAc), with a preference for the alpha- over the beta-anomer. Can also bind non-reducing terminal galactose (Gal) residues but with a lower affinity. Strongly interacts with glycolipid type glycans with terminal non-reducing Gal or GalNAc but fails to bind sialylated or fucosylated forms of the same glycans. Strongly interacts with galactosylated N-glycans, displaying highest affinity for alpha-1-3 branched mono-antennary N-glycans but also binding to multi-antennary glycans. In Sclerotinia sclerotiorum (strain ATCC 18683 / 1980 / Ss-1) (White mold), this protein is Agglutinin.